We begin with the raw amino-acid sequence, 465 residues long: UDP-N-acetylmuramate--L-alanine ligase (465 aa).

114–120 (GTHGKTT) is an ATP binding site.

The protein belongs to the MurCDEF family.

Its subcellular location is the cytoplasm. It carries out the reaction UDP-N-acetyl-alpha-D-muramate + L-alanine + ATP = UDP-N-acetyl-alpha-D-muramoyl-L-alanine + ADP + phosphate + H(+). The protein operates within cell wall biogenesis; peptidoglycan biosynthesis. Functionally, cell wall formation. The sequence is that of UDP-N-acetylmuramate--L-alanine ligase from Chlorobium phaeobacteroides (strain BS1).